We begin with the raw amino-acid sequence, 609 residues long: MSMVRLYTRVLELLGAEARLGWILAGANLLLAGAQFAEPVLFGRIIDVLSGNPASGLFGMASTSPWPLLAVWAAFGLFTILCGVTVALQADRLSHRQRQAVLTGYFEHIMQLPLAYHAGTHSGRLMKVMLQGTDALWRLWLGFFREHFAAMMSLVVLLPLSLYINWRLAILLFALCIVFTMLTTLVVRRTFDMQNEVEAHFSDLSARASDALGNVALVQSFVRVDAEVQGLRFVVDKLLSAQMPVLSWWAVVTVMTRASTTITILAIFTAGIALNQRGMTSIGEIVMFVSFATMLIQRLEQVVSFINSVFMEAPRLKEFFDVLDAVPAVRDRPDAVDPGRLQGRVEFNDVSFSYDSKRPAVANLSFVASPGETIALVGPTGAGKSTAVALLHRAFDPQSGIIRIDGMDIRDLTLSGLRRNIGVVFQEPLLFNRSIAENLRVGKPDATDEEMRLAAGRAQALDFIERGEKKFDTHAGERGRMLSGGERQRLSIARALLKDPPILILDEATSALDAVTEAKVNAALDEVMKGRTTFVIAHRLSTIRNAARILVFADGRVIESGTFGELLANGGHFAQLAKAQFMTQESTQADLSSSRTNPAVEIRPLSLGN.

One can recognise an ABC transmembrane type-1 domain in the interval 21–311 (GWILAGANLL…VVSFINSVFM (291 aa)). Helical transmembrane passes span 22–42 (WILA…PVLF), 68–88 (LLAV…TVAL), 146–166 (EHFA…YINW), 167–187 (RLAI…TLVV), 248–268 (WWAV…LAIF), and 285–305 (IVMF…VVSF). One can recognise an ABC transporter domain in the interval 345 to 579 (VEFNDVSFSY…GGHFAQLAKA (235 aa)). An ATP-binding site is contributed by 378-385 (GPTGAGKS).

This sequence belongs to the ABC transporter superfamily. Beta-(1--&gt;2)glucan exporter (TC 3.A.1.108.1) family. In terms of assembly, homodimer.

Its subcellular location is the cell inner membrane. The catalysed reaction is [(1-&gt;2)-beta-D-glucosyl](n)(in) + ATP + H2O = [(1-&gt;2)-beta-D-glucosyl](n)(out) + ADP + phosphate + H(+). Its function is as follows. Involved in beta-(1--&gt;2)glucan export. Transmembrane domains (TMD) form a pore in the inner membrane and the ATP-binding domain (NBD) is responsible for energy generation. This is Beta-(1--&gt;2)glucan export ATP-binding/permease protein NdvA from Nitrobacter winogradskyi (strain ATCC 25391 / DSM 10237 / CIP 104748 / NCIMB 11846 / Nb-255).